Here is a 94-residue protein sequence, read N- to C-terminus: C-X-C motif chemokine 11 (94 aa).

An N-terminal signal peptide occupies residues 1 to 21; sequence MSVKGMAIALAVILCATVVQG. R27 bears the Citrulline; by PAD2 mark. Intrachain disulfides connect C30–C57 and C32–C74.

Interacts with TNFAIP6 (via Link domain). As to expression, high levels in peripheral blood leukocytes, pancreas and liver astrocytes. Moderate levels in thymus, spleen and lung. Low levels in placenta, prostate and small intestine. Also found in epidermal basal layer keratinocytes in skin disorders.

The protein localises to the secreted. Chemotactic for interleukin-activated T-cells but not unstimulated T-cells, neutrophils or monocytes. Induces calcium release in activated T-cells. Binds to CXCR3. May play an important role in CNS diseases which involve T-cell recruitment. May play a role in skin immune responses. This chain is C-X-C motif chemokine 11 (CXCL11), found in Homo sapiens (Human).